A 420-amino-acid chain; its full sequence is ATP phosphoribosyltransferase regulatory subunit (420 aa).

Belongs to the class-II aminoacyl-tRNA synthetase family. HisZ subfamily. As to quaternary structure, heteromultimer composed of HisG and HisZ subunits.

It is found in the cytoplasm. It functions in the pathway amino-acid biosynthesis; L-histidine biosynthesis; L-histidine from 5-phospho-alpha-D-ribose 1-diphosphate: step 1/9. In terms of biological role, required for the first step of histidine biosynthesis. May allow the feedback regulation of ATP phosphoribosyltransferase activity by histidine. This is ATP phosphoribosyltransferase regulatory subunit from Bacillus thuringiensis subsp. konkukian (strain 97-27).